The chain runs to 199 residues: Molybdenum cofactor guanylyltransferase (199 aa).

GTP-binding positions include 12-14 (LAG), Lys-25, Asn-53, Asp-71, and Asp-101. Asp-101 is a Mg(2+) binding site.

Belongs to the MobA family. Monomer. The cofactor is Mg(2+).

The protein resides in the cytoplasm. The enzyme catalyses Mo-molybdopterin + GTP + H(+) = Mo-molybdopterin guanine dinucleotide + diphosphate. Transfers a GMP moiety from GTP to Mo-molybdopterin (Mo-MPT) cofactor (Moco or molybdenum cofactor) to form Mo-molybdopterin guanine dinucleotide (Mo-MGD) cofactor. The sequence is that of Molybdenum cofactor guanylyltransferase from Polynucleobacter asymbioticus (strain DSM 18221 / CIP 109841 / QLW-P1DMWA-1) (Polynucleobacter necessarius subsp. asymbioticus).